A 362-amino-acid chain; its full sequence is Ferrochelatase (362 aa).

Residues His228 and Glu309 each coordinate Fe cation.

The protein belongs to the ferrochelatase family.

It localises to the cytoplasm. It catalyses the reaction heme b + 2 H(+) = protoporphyrin IX + Fe(2+). The protein operates within porphyrin-containing compound metabolism; protoheme biosynthesis; protoheme from protoporphyrin-IX: step 1/1. In terms of biological role, catalyzes the ferrous insertion into protoporphyrin IX. This Bordetella bronchiseptica (strain ATCC BAA-588 / NCTC 13252 / RB50) (Alcaligenes bronchisepticus) protein is Ferrochelatase.